Reading from the N-terminus, the 428-residue chain is Serine--tRNA ligase (428 aa).

231–233 (TAE) contacts L-serine. Residue 262 to 264 (RSE) coordinates ATP. Residue E285 participates in L-serine binding. Residue 349-352 (EISS) participates in ATP binding. S385 serves as a coordination point for L-serine.

This sequence belongs to the class-II aminoacyl-tRNA synthetase family. Type-1 seryl-tRNA synthetase subfamily. Homodimer. The tRNA molecule binds across the dimer.

The protein localises to the cytoplasm. The enzyme catalyses tRNA(Ser) + L-serine + ATP = L-seryl-tRNA(Ser) + AMP + diphosphate + H(+). It carries out the reaction tRNA(Sec) + L-serine + ATP = L-seryl-tRNA(Sec) + AMP + diphosphate + H(+). Its pathway is aminoacyl-tRNA biosynthesis; selenocysteinyl-tRNA(Sec) biosynthesis; L-seryl-tRNA(Sec) from L-serine and tRNA(Sec): step 1/1. Catalyzes the attachment of serine to tRNA(Ser). Is also able to aminoacylate tRNA(Sec) with serine, to form the misacylated tRNA L-seryl-tRNA(Sec), which will be further converted into selenocysteinyl-tRNA(Sec). In Staphylococcus aureus (strain MRSA252), this protein is Serine--tRNA ligase.